A 368-amino-acid polypeptide reads, in one-letter code: Alanine racemase 3 (368 aa).

The Proton acceptor; specific for D-alanine role is filled by Lys-42. N6-(pyridoxal phosphate)lysine is present on Lys-42. Residue Arg-141 coordinates substrate. The Proton acceptor; specific for L-alanine role is filled by Tyr-262. Substrate is bound at residue Met-310.

It belongs to the alanine racemase family. It depends on pyridoxal 5'-phosphate as a cofactor.

The enzyme catalyses L-alanine = D-alanine. Its pathway is amino-acid biosynthesis; D-alanine biosynthesis; D-alanine from L-alanine: step 1/1. Its function is as follows. Catalyzes the interconversion of L-alanine and D-alanine. May also act on other amino acids. The sequence is that of Alanine racemase 3 (alr3) from Salmonella typhi.